Reading from the N-terminus, the 644-residue chain is DNA gyrase subunit B (644 aa).

Positions 429-543 constitute a Toprim domain; it reads CEIFLVEGDS…AGYVYIAQPP (115 aa). Residues Glu435, Asp508, and Asp510 each contribute to the Mg(2+) site.

The protein belongs to the type II topoisomerase GyrB family. As to quaternary structure, heterotetramer, composed of two GyrA and two GyrB chains. In the heterotetramer, GyrA contains the active site tyrosine that forms a transient covalent intermediate with DNA, while GyrB binds cofactors and catalyzes ATP hydrolysis. Mg(2+) is required as a cofactor. The cofactor is Mn(2+). It depends on Ca(2+) as a cofactor.

The protein resides in the cytoplasm. It carries out the reaction ATP-dependent breakage, passage and rejoining of double-stranded DNA.. Its function is as follows. A type II topoisomerase that negatively supercoils closed circular double-stranded (ds) DNA in an ATP-dependent manner to modulate DNA topology and maintain chromosomes in an underwound state. Negative supercoiling favors strand separation, and DNA replication, transcription, recombination and repair, all of which involve strand separation. Also able to catalyze the interconversion of other topological isomers of dsDNA rings, including catenanes and knotted rings. Type II topoisomerases break and join 2 DNA strands simultaneously in an ATP-dependent manner. The protein is DNA gyrase subunit B of Staphylococcus aureus (strain MRSA252).